A 468-amino-acid polypeptide reads, in one-letter code: Interleukin-9 receptor (468 aa).

The signal sequence occupies residues 1–37; sequence MALGRCIAEGWTLERVAVKQVSWFLIYSWVCSGVCRG. Over 38–270 the chain is Extracellular; it reads VSVPEQGGGG…GLLVPRWQWS (233 aa). Asn-116 and Asn-155 each carry an N-linked (GlcNAc...) asparagine glycan. Residues 148–256 enclose the Fibronectin type-III domain; sequence PPSDLQSNVS…WSQPVSFPSP (109 aa). The short motif at 244 to 248 is the WSXWS motif element; that stretch reads WSEWS. The chain crosses the membrane as a helical span at residues 271–291; it reads ASILVVVPIFLLLTGFVHLLF. Topologically, residues 292-468 are cytoplasmic; the sequence is KLSPRLKRIF…PVALPVSSRA (177 aa). The short motif at 301 to 309 is the Box 1 motif element; that stretch reads FYQNIPSPE. Positions 407 to 426 are disordered; that stretch reads PQEDWAPLGSARPPPPDSDS.

It belongs to the type I cytokine receptor family. Type 4 subfamily. Interacts with IL9.

Its subcellular location is the cell membrane. The protein localises to the secreted. Functionally, plays an important role in the immune response against parasites by acting as a receptor of IL9. This is Interleukin-9 receptor (Il9r) from Mus musculus (Mouse).